A 245-amino-acid chain; its full sequence is Probable transcriptional regulatory protein CPR_1922 (245 aa).

It belongs to the TACO1 family.

It localises to the cytoplasm. This Clostridium perfringens (strain SM101 / Type A) protein is Probable transcriptional regulatory protein CPR_1922.